Reading from the N-terminus, the 374-residue chain is UDP-N-acetylglucosamine--N-acetylmuramyl-(pentapeptide) pyrophosphoryl-undecaprenol N-acetylglucosamine transferase (374 aa).

Residues 35–37 (TGG), Asn-144, Arg-185, Ser-211, and Gln-305 contribute to the UDP-N-acetyl-alpha-D-glucosamine site.

The protein belongs to the glycosyltransferase 28 family. MurG subfamily.

It is found in the cell inner membrane. It catalyses the reaction di-trans,octa-cis-undecaprenyl diphospho-N-acetyl-alpha-D-muramoyl-L-alanyl-D-glutamyl-meso-2,6-diaminopimeloyl-D-alanyl-D-alanine + UDP-N-acetyl-alpha-D-glucosamine = di-trans,octa-cis-undecaprenyl diphospho-[N-acetyl-alpha-D-glucosaminyl-(1-&gt;4)]-N-acetyl-alpha-D-muramoyl-L-alanyl-D-glutamyl-meso-2,6-diaminopimeloyl-D-alanyl-D-alanine + UDP + H(+). It functions in the pathway cell wall biogenesis; peptidoglycan biosynthesis. Functionally, cell wall formation. Catalyzes the transfer of a GlcNAc subunit on undecaprenyl-pyrophosphoryl-MurNAc-pentapeptide (lipid intermediate I) to form undecaprenyl-pyrophosphoryl-MurNAc-(pentapeptide)GlcNAc (lipid intermediate II). The sequence is that of UDP-N-acetylglucosamine--N-acetylmuramyl-(pentapeptide) pyrophosphoryl-undecaprenol N-acetylglucosamine transferase from Trichodesmium erythraeum (strain IMS101).